The chain runs to 697 residues: Portal protein (697 aa).

The segment at 633–697 (MSREAAGGVP…RRAGGPYGFH (65 aa)) is disordered. The span at 664–689 (ITADEERRGPERVGRFRNGGPDDPRR) shows a compositional bias: basic and acidic residues.

Belongs to the herpesviridae portal protein family. In terms of assembly, homododecamerizes. Interacts with terminase subunits TRM1 and TRM3.

It localises to the virion. The protein localises to the host nucleus. Functionally, forms a portal in the viral capsid through which viral DNA is translocated during DNA packaging. Assembles as a dodecamer at a single fivefold axe of the T=16 icosahedric capsid. Binds to the molecular motor that translocates the viral DNA, termed terminase. The protein is Portal protein (UL104) of Homo sapiens (Human).